Reading from the N-terminus, the 303-residue chain is Aquaporin-7 (303 aa).

Residues 1 to 21 are Cytoplasmic-facing; sequence MAPRSVLETIQSVLQKNMVRE. Phosphoserine is present on Ser-5. The chain crosses the membrane as a helical span at residues 22 to 39; that stretch reads FLAEFLSTYVMMVFGLGS. Residues 40-52 lie on the Extracellular side of the membrane; sequence VAHMVLGENSGSY. A helical membrane pass occupies residues 53 to 70; it reads LGVNLGFGFGVTMGVHVA. At 71-74 the chain is on the cytoplasmic side; sequence GGIS. The discontinuously helical intramembrane region spans 75–88; that stretch reads GAHMNAAVTFTNCA. Residues 79–81 carry the NPA 1 motif; the sequence is NAA. At 89–96 the chain is on the cytoplasmic side; sequence LGRMTWKK. Residues 97 to 117 traverse the membrane as a helical segment; sequence FPVYVLGQFLGSFSAAATTYL. Topologically, residues 118–152 are extracellular; sequence IFYGAINHFAGGDLLVTGSKATANIFATYLPEYMT. A helical transmembrane segment spans residues 153–173; sequence LWRGFLDEAFVTGMLQLCLFA. Residues 174 to 185 lie on the Cytoplasmic side of the membrane; it reads ITDKKNSPALQG. Residues 186-202 form a helical membrane-spanning segment; sequence TEPLVIGILVTVLGVSL. Residues 203–206 are Extracellular-facing; sequence GMNS. Positions 207 to 220 form an intramembrane region, discontinuously helical; sequence GYAINPSRDLPPRL. Positions 211-213 match the NPA 2 motif; the sequence is NPS. At 221-238 the chain is on the extracellular side; that stretch reads FTFIAGWGKQVFRAGNNW. A helical transmembrane segment spans residues 239-260; that stretch reads WWVPVVAPLLGAYLGGIVYLGL. Topologically, residues 261–303 are cytoplasmic; it reads IHPSIPQDPQRLENFTARDQKVTASYKNAASANISGSVPLEHF.

Belongs to the MIP/aquaporin (TC 1.A.8) family. As to quaternary structure, homotetramer; each monomer provides an independent glycerol/water pore. Two homotetramers on opposing membranes can dimerize, forming a cell-cell junction. Interacts with PLIN1. Phosphorylation by PKA could prevent the interaction with PLIN1. As to expression, detected in proximal tubules in kidney. Detected in the capillary network between muscle fibers in skeletal muscle and heart, and in spermatids and on spermatozoa tails in testis and epididymis. Detected in white and brown adipose tissue, especially on small blood vessels (at protein level). Detected in kidney and white adipose tissue.

It localises to the cell membrane. The protein resides in the cytoplasmic vesicle membrane. The protein localises to the lipid droplet. It catalyses the reaction glycerol(in) = glycerol(out). It carries out the reaction H2O(in) = H2O(out). The enzyme catalyses urea(in) = urea(out). Glycerol transport is regulated by pH, with the porin being permeable to glycerol at pH 7.4 but not at pH 5.5. Water permeability, however, is not influenced by pH. Aquaglyceroporins form homotetrameric transmembrane channels, with each monomer independently mediating glycerol and water transport across the plasma membrane along their osmotic gradient. Could also be permeable to urea. Mediates the efflux of glycerol, formed upon triglyceride hydrolysis, to avoid its accumulation in adipocytes and to make it available to other tissues. In the kidney, mediates the reabsorption of glycerol, preventing its loss in urine, again participating to energy homeostasis. In pancreatic beta cells, it also mediates the efflux of glycerol, regulating its intracellular levels. The polypeptide is Aquaporin-7 (Mus musculus (Mouse)).